The following is a 245-amino-acid chain: Alanyl-tRNA editing protein AlaX-M (245 aa).

Zn(2+) contacts are provided by His107, His111, Cys210, and His214.

This sequence belongs to the class-II aminoacyl-tRNA synthetase family. Editing domain AlaX-M subfamily. It depends on Zn(2+) as a cofactor.

It localises to the cytoplasm. Functions in trans to edit the amino acid moiety from mischarged charged tRNA(Ala). This is Alanyl-tRNA editing protein AlaX-M (alaXM) from Methanosarcina acetivorans (strain ATCC 35395 / DSM 2834 / JCM 12185 / C2A).